The sequence spans 643 residues: Macrolide export ATP-binding/permease protein MacB (643 aa).

Positions 4-242 (IEIKELNRYF…VNNQSKAKSR (239 aa)) constitute an ABC transporter domain. ATP is bound at residue 40–47 (GQSGSGKS). 4 consecutive transmembrane segments (helical) span residues 269–289 (LLTM…VALG), 523–543 (IAFI…LVSV), 572–592 (ILIC…IGGI), and 603–623 (VFST…GVIF).

This sequence belongs to the ABC transporter superfamily. Macrolide exporter (TC 3.A.1.122) family. In terms of assembly, homodimer. Part of the tripartite efflux system MacAB-TolC, which is composed of an inner membrane transporter, MacB, a periplasmic membrane fusion protein, MacA, and an outer membrane component, TolC. The complex forms a large protein conduit and can translocate molecules across both the inner and outer membranes. Interacts with MacA.

Its subcellular location is the cell inner membrane. Part of the tripartite efflux system MacAB-TolC. MacB is a non-canonical ABC transporter that contains transmembrane domains (TMD), which form a pore in the inner membrane, and an ATP-binding domain (NBD), which is responsible for energy generation. Confers resistance against macrolides. The protein is Macrolide export ATP-binding/permease protein MacB of Mannheimia succiniciproducens (strain KCTC 0769BP / MBEL55E).